The chain runs to 468 residues: Glutamate--tRNA ligase 2 (468 aa).

Residues 9–19 carry the 'HIGH' region motif; that stretch reads PSPTGSLHLGG. Positions 238 to 242 match the 'KMSKS' region motif; sequence KLSKR. Residue lysine 241 coordinates ATP.

Belongs to the class-I aminoacyl-tRNA synthetase family. Glutamate--tRNA ligase type 1 subfamily. In terms of assembly, monomer.

The protein resides in the cytoplasm. It carries out the reaction tRNA(Glu) + L-glutamate + ATP = L-glutamyl-tRNA(Glu) + AMP + diphosphate. Its function is as follows. Catalyzes the attachment of glutamate to tRNA(Glu) in a two-step reaction: glutamate is first activated by ATP to form Glu-AMP and then transferred to the acceptor end of tRNA(Glu). In Anaplasma phagocytophilum (strain HZ), this protein is Glutamate--tRNA ligase 2.